A 490-amino-acid chain; its full sequence is 23S rRNA (uracil(1939)-C(5))-methyltransferase RlmD (490 aa).

A TRAM domain is found at 14-75 (APAPAEYPID…SSFEKATLTA (62 aa)). [4Fe-4S] cluster-binding residues include Cys88, Cys98, Cys101, and Cys180. The S-adenosyl-L-methionine site is built by Gln289, Phe318, Asn323, Glu339, Asn374, and Asp395. Cys446 (nucleophile) is an active-site residue.

The protein belongs to the class I-like SAM-binding methyltransferase superfamily. RNA M5U methyltransferase family. RlmD subfamily.

It catalyses the reaction uridine(1939) in 23S rRNA + S-adenosyl-L-methionine = 5-methyluridine(1939) in 23S rRNA + S-adenosyl-L-homocysteine + H(+). Catalyzes the formation of 5-methyl-uridine at position 1939 (m5U1939) in 23S rRNA. The sequence is that of 23S rRNA (uracil(1939)-C(5))-methyltransferase RlmD from Polaromonas naphthalenivorans (strain CJ2).